The chain runs to 1151 residues: SCF E3 ubiquitin ligase complex F-box protein GRR1 (1151 aa).

Basic and acidic residues predominate over residues 1–18; it reads MDQDNNNHNDSNRLHPPD. Positions 1–72 are disordered; the sequence is MDQDNNNHND…ATSERNASEV (72 aa). Residues 38-49 show a composition bias toward low complexity; that stretch reads NNNNNNNNNNNN. A compositionally biased stretch (basic and acidic residues) spans 58 to 72; sequence RTRETATSERNASEV. Residues Ser199 and Ser300 each carry the phosphoserine modification. In terms of domain architecture, F-box spans 314–361; that stretch reads VFALNMLPSEILHLILDKLNQKYDIVKFLTVSKLWAEIIVKILYYRPH. 13 LRR repeats span residues 399-423, 424-449, 450-475, 476-501, 502-527, 528-553, 554-582, 583-608, 609-634, 635-660, 661-685, 686-714, and 715-740; these read GDYM…TLVF, CKHI…DITG, IRDV…YVPQ, ARNV…KITA, NNNM…DITL, SPNV…RITH, NTNI…DLSG, CENI…FLGK, CSRI…HFGH, CFNI…DFAC, CTNL…GLVK, CTQM…HLSY, and CSNL…SLTA. The span at 1066–1080 shows a compositional bias: low complexity; it reads AGANDTSNNETNNGN. 2 disordered regions span residues 1066 to 1090 and 1118 to 1151; these read AGAN…NPNF and VRNN…EDML.

Interacts with SKP1. Component of the probable SCF(GRR1) complex containing CDC53, SKP1, RBX1 and GRR1.

Its subcellular location is the membrane. It participates in protein modification; protein ubiquitination. Functionally, substrate recognition component of a SCF (SKP1-CUL1-F-box protein) E3 ubiquitin-protein ligase complex which mediates the ubiquitination and subsequent proteasomal degradation of target proteins. Recognizes and directs ubiquitination of phosphorylated CLN1, CLN2 and GIC2. Probably constitutes the primary response element required for the generation or interpretation of the signal that induces glucose repression. This Saccharomyces cerevisiae (strain ATCC 204508 / S288c) (Baker's yeast) protein is SCF E3 ubiquitin ligase complex F-box protein GRR1 (GRR1).